A 305-amino-acid polypeptide reads, in one-letter code: MIPVVCIVGPTGAGKTAASLHLAAVFDGAVINCDSRQVYKDFPVITAQPTLEEQASCPHHLYGFMGIQEKMSAGVFLDMACPIIKEEHAHGRLPLLVGGTGLYLRALLDGIAAIPDIPETVSQKWQERCAARGAPALHRLLEAQDPQTAERLHPNDSQRIVRALEVQEATGRPLSWWHAQPVPPSPYRAVKIGVSATLDGLTPRLAKRIEMMLAAGALDEARNAMGICDNPRAPGWSGIGCAELYSYIKGAVSLDECKRLWLHNTRQYAKRQLTWFRREPNLHWLDGTDMAAMERLVHSVAGSTG.

9 to 16 contacts ATP; it reads GPTGAGKT. 11-16 serves as a coordination point for substrate; sequence TGAGKT. 2 interaction with substrate tRNA regions span residues 34–37 and 158–162; these read DSRQ and QRIVR.

The protein belongs to the IPP transferase family. As to quaternary structure, monomer. Mg(2+) serves as cofactor.

It carries out the reaction adenosine(37) in tRNA + dimethylallyl diphosphate = N(6)-dimethylallyladenosine(37) in tRNA + diphosphate. In terms of biological role, catalyzes the transfer of a dimethylallyl group onto the adenine at position 37 in tRNAs that read codons beginning with uridine, leading to the formation of N6-(dimethylallyl)adenosine (i(6)A). The polypeptide is tRNA dimethylallyltransferase (Oleidesulfovibrio alaskensis (strain ATCC BAA-1058 / DSM 17464 / G20) (Desulfovibrio alaskensis)).